The chain runs to 419 residues: Effector protein BipC (419 aa).

Disordered regions lie at residues 62 to 94 (VAGSGAQRVELARPKPDAQTRATDRRTVSGLER) and 338 to 402 (LQSG…AKSQ). 2 stretches are compositionally biased toward basic and acidic residues: residues 71-94 (ELARPKPDAQTRATDRRTVSGLER) and 380-392 (TRDEAAHRSREAA).

The protein belongs to the SctB/SipC family.

Its subcellular location is the secreted. This Burkholderia pseudomallei (strain 1710b) protein is Effector protein BipC (bipC).